The chain runs to 497 residues: Glutamyl-tRNA(Gln) amidotransferase subunit A (497 aa).

Residues K91 and S166 each act as charge relay system in the active site. Residues 143 to 171 form a disordered region; that stretch reads SSTENSAYGPTHNPWDLERTAGGSGGGSS. S190 acts as the Acyl-ester intermediate in catalysis.

It belongs to the amidase family. GatA subfamily. In terms of assembly, heterotrimer of A, B and C subunits.

It carries out the reaction L-glutamyl-tRNA(Gln) + L-glutamine + ATP + H2O = L-glutaminyl-tRNA(Gln) + L-glutamate + ADP + phosphate + H(+). Functionally, allows the formation of correctly charged Gln-tRNA(Gln) through the transamidation of misacylated Glu-tRNA(Gln) in organisms which lack glutaminyl-tRNA synthetase. The reaction takes place in the presence of glutamine and ATP through an activated gamma-phospho-Glu-tRNA(Gln). In Corynebacterium glutamicum (strain R), this protein is Glutamyl-tRNA(Gln) amidotransferase subunit A.